The sequence spans 142 residues: Large ribosomal subunit protein uL11 (142 aa).

It belongs to the universal ribosomal protein uL11 family. As to quaternary structure, part of the ribosomal stalk of the 50S ribosomal subunit. Interacts with L10 and the large rRNA to form the base of the stalk. L10 forms an elongated spine to which L12 dimers bind in a sequential fashion forming a multimeric L10(L12)X complex. Post-translationally, one or more lysine residues are methylated.

Its function is as follows. Forms part of the ribosomal stalk which helps the ribosome interact with GTP-bound translation factors. This chain is Large ribosomal subunit protein uL11, found in Shewanella sp. (strain W3-18-1).